Here is a 651-residue protein sequence, read N- to C-terminus: Bromodomain-containing protein 7 (651 aa).

Residue Lys21 forms a Glycyl lysine isopeptide (Lys-Gly) (interchain with G-Cter in SUMO2) linkage. Polar residues predominate over residues 35–45 (TELSTGSSGHD). Residues 35 to 132 (TELSTGSSGH…SSLAKQEEVE (98 aa)) form a disordered region. Basic and acidic residues predominate over residues 47–57 (SLFEDKNDHDK). A Glycyl lysine isopeptide (Lys-Gly) (interchain with G-Cter in SUMO2) cross-link involves residue Lys52. The segment covering 58–69 (HKDRKRKKRKKG) has biased composition (basic residues). Positions 65–96 (KRKKGEKQIPGEEKGRKRRRVKEDKKKRDRDR) match the Nuclear localization signal motif. Residues 70–106 (EKQIPGEEKGRKRRRVKEDKKKRDRDRVENEAEKDLQ) are compositionally biased toward basic and acidic residues. Residues Lys127, Lys186, Lys197, Lys201, Lys212, and Lys241 each participate in a glycyl lysine isopeptide (Lys-Gly) (interchain with G-Cter in SUMO2) cross-link. Residues 131–235 (VEQTPLQEAL…HSGMKILSQE (105 aa)) form the Bromo domain. Positions 253-301 (TRKQKDGTDTSQSGEDGGCWQREREDSGDAEAHAFKSPSKENKKKDKDM) are disordered. Residues 273-301 (QREREDSGDAEAHAFKSPSKENKKKDKDM) are compositionally biased toward basic and acidic residues. Ser279 and Ser289 each carry phosphoserine. Residues Lys305 and Lys307 each participate in a glycyl lysine isopeptide (Lys-Gly) (interchain with G-Cter in SUMO2) cross-link. N6-acetyllysine is present on Lys328. Lys344 is covalently cross-linked (Glycyl lysine isopeptide (Lys-Gly) (interchain with G-Cter in SUMO2)). A Phosphoserine modification is found at Ser380. Lys389 participates in a covalent cross-link: Glycyl lysine isopeptide (Lys-Gly) (interchain with G-Cter in SUMO2). Residue Ser482 is modified to Phosphoserine. Thr514 is modified (phosphothreonine). Positions 536–567 (SEEAEIFQKKLDETTRLLRELQEAQNERLSTR) form a coiled coil. Ser621 bears the Phosphoserine mark.

As to quaternary structure, interacts with TRIM24, PTPN13 and DVL1. Identified in a complex with SMARCA4/BRG1, SMARCC1/BAF155, SMARCE1/BAF57, DPF2/BAF45D and ARID2, subunits of the SWI/SNF-B (PBAF) chromatin remodeling complex. Interacts with IRF2 and HNRPUL1. Interacts (via N-terminus) with TP53. Interacts (via C-terminus) with EP300. Interacts with BRCA1. Interacts (via bromo domain) with histone H3 (via N-terminus) acetylated at 'Lys-14' (H3K14ac). Has low affinity for histone H3 acetylated at 'Lys-9' (H3K9ac). Has the highest affinity for histone H3 that is acetylated both at 'Lys-9' (H3K9ac) and at 'Lys-14' (H3K14ac). Has very low affinity for non-acetylated histone H3. Interacts (via bromo domain) with histone H4 (via N-terminus) acetylated at 'Lys-8' (H3K8ac) (in vitro).

It is found in the nucleus. The protein localises to the chromosome. Acts both as coactivator and as corepressor. May play a role in chromatin remodeling. Activator of the Wnt signaling pathway in a DVL1-dependent manner by negatively regulating the GSK3B phosphotransferase activity. Induces dephosphorylation of GSK3B at 'Tyr-216'. Down-regulates TRIM24-mediated activation of transcriptional activation by AR. Transcriptional corepressor that down-regulates the expression of target genes. Binds to target promoters, leading to increased histone H3 acetylation at 'Lys-9' (H3K9ac). Binds to the ESR1 promoter. Recruits BRCA1 and POU2F1 to the ESR1 promoter. Coactivator for TP53-mediated activation of transcription of a set of target genes. Required for TP53-mediated cell-cycle arrest in response to oncogene activation. Promotes acetylation of TP53 at 'Lys-382', and thereby promotes efficient recruitment of TP53 to target promoters. Inhibits cell cycle progression from G1 to S phase. This is Bromodomain-containing protein 7 (BRD7) from Homo sapiens (Human).